We begin with the raw amino-acid sequence, 219 residues long: Melanoma-associated antigen H1 (219 aa).

The span at 1 to 13 shows a compositional bias: basic residues; sequence MPRGRKSRRRRNA. Positions 1 to 84 are disordered; the sequence is MPRGRKSRRR…QKPSVPRSNF (84 aa). An MAGE domain is found at 1 to 198; it reads MPRGRKSRRR…KDWPCNYDWD (198 aa). Residues 44-57 show a composition bias toward acidic residues; it reads PEDDLSGPEEDPST. Residues 58 to 74 are compositionally biased toward low complexity; that stretch reads PEEASTTPEEASSTAQA. Y195 carries the phosphotyrosine modification.

The protein is Melanoma-associated antigen H1 (MAGEH1) of Homo sapiens (Human).